The following is a 728-amino-acid chain: E3 ubiquitin-protein ligase TRIM36 (728 aa).

The RING-type; degenerate zinc-finger motif lies at 33–84; it reads CPACKELFTHPLILPCQHSICHKCVKELLLTLDDSFNDVGSDNSNQSSPRLR. 2 B box-type zinc fingers span residues 154 to 192 and 207 to 249; these read AIMCDLCKPPPQESTKSCMDCSASYCNECFKIHHPWGTI and PKIL…VTTM. 4 residues coordinate Zn(2+): C212, H215, C235, and H241. Positions 271-345 form a coiled coil; it reads ESQVKSQISE…MEEYQGLLEN (75 aa). Positions 356–413 constitute a COS domain; sequence LKETDQSCFVQTAKQLHLRIQKATESLKSFRPAAQTSFEDYVVNTSKQTELLGELSFF. A Fibronectin type-III domain is found at 419–510; it reads VPEINEEQSK…RELILHTPPA (92 aa). A B30.2/SPRY domain is found at 508–720; sequence PPAPVFSFLF…IQLEEPITAK (213 aa).

It belongs to the TRIM/RBCC family. In terms of assembly, interacts with CENPH. As to expression, highly expressed in testis, prostate and brain. Weakly expressed in kidney, lung and heart. Expressed in fetal tissues.

The protein localises to the cytoplasm. The protein resides in the cytoplasmic vesicle. It localises to the secretory vesicle. Its subcellular location is the acrosome. It is found in the cytoskeleton. It carries out the reaction S-ubiquitinyl-[E2 ubiquitin-conjugating enzyme]-L-cysteine + [acceptor protein]-L-lysine = [E2 ubiquitin-conjugating enzyme]-L-cysteine + N(6)-ubiquitinyl-[acceptor protein]-L-lysine.. Functionally, E3 ubiquitin-protein ligase which mediates ubiquitination and subsequent proteasomal degradation of target proteins. Involved in chromosome segregation and cell cycle regulation. May play a role in the acrosome reaction and fertilization. The sequence is that of E3 ubiquitin-protein ligase TRIM36 (TRIM36) from Homo sapiens (Human).